We begin with the raw amino-acid sequence, 475 residues long: Ribulose bisphosphate carboxylase large chain (475 aa).

Positions Met1–Ser2 are excised as a propeptide. The residue at position 3 (Pro3) is an N-acetylproline. An N6,N6,N6-trimethyllysine modification is found at Lys14. Substrate contacts are provided by Asn123 and Thr173. The Proton acceptor role is filled by Lys175. Substrate is bound at residue Lys177. Mg(2+) is bound by residues Lys201, Asp203, and Glu204. The residue at position 201 (Lys201) is an N6-carboxylysine. His294 functions as the Proton acceptor in the catalytic mechanism. Arg295, His327, and Ser379 together coordinate substrate.

Belongs to the RuBisCO large chain family. Type I subfamily. Heterohexadecamer of 8 large chains and 8 small chains; disulfide-linked. The disulfide link is formed within the large subunit homodimers. The cofactor is Mg(2+). The disulfide bond which can form in the large chain dimeric partners within the hexadecamer appears to be associated with oxidative stress and protein turnover.

It is found in the plastid. The protein localises to the chloroplast. The enzyme catalyses 2 (2R)-3-phosphoglycerate + 2 H(+) = D-ribulose 1,5-bisphosphate + CO2 + H2O. It carries out the reaction D-ribulose 1,5-bisphosphate + O2 = 2-phosphoglycolate + (2R)-3-phosphoglycerate + 2 H(+). In terms of biological role, ruBisCO catalyzes two reactions: the carboxylation of D-ribulose 1,5-bisphosphate, the primary event in carbon dioxide fixation, as well as the oxidative fragmentation of the pentose substrate in the photorespiration process. Both reactions occur simultaneously and in competition at the same active site. The polypeptide is Ribulose bisphosphate carboxylase large chain (Pinus edulis (Pinyon pine)).